We begin with the raw amino-acid sequence, 131 residues long: MTTKRKPYVRPMTSTWWKKLPFYRFYMVREGTAVPTVWFSIVLIYGLFALKHGAESWAGYIGFLQNPVVVILNLITLAAALLHTKTWFELAPKAANVIIKGEKMGPEPVIKGLWVVTAVVTVVILFVALFW.

Transmembrane regions (helical) follow at residues 30–50 (EGTA…LFAL), 61–81 (IGFL…AAAL), and 110–130 (IKGL…VALF).

Belongs to the FrdC family. Part of an enzyme complex containing four subunits: a flavoprotein (FrdA), an iron-sulfur protein (FrdB), and two hydrophobic anchor proteins (FrdC and FrdD).

Its subcellular location is the cell inner membrane. Its function is as follows. Two distinct, membrane-bound, FAD-containing enzymes are responsible for the catalysis of fumarate and succinate interconversion; fumarate reductase is used in anaerobic growth, and succinate dehydrogenase is used in aerobic growth. Anchors the catalytic components of the fumarate reductase complex to the cell inner membrane, binds quinones. In Klebsiella pneumoniae (strain 342), this protein is Fumarate reductase subunit C.